An 87-amino-acid chain; its full sequence is Small ribosomal subunit protein bS20 (87 aa).

Residues 1-15 (MANHKSAAKRARQSI) are compositionally biased toward basic residues. The segment at 1-29 (MANHKSAAKRARQSIRKTAVNNARKSTVK) is disordered. The span at 19–29 (AVNNARKSTVK) shows a compositional bias: polar residues.

It belongs to the bacterial ribosomal protein bS20 family.

Functionally, binds directly to 16S ribosomal RNA. The chain is Small ribosomal subunit protein bS20 from Bdellovibrio bacteriovorus (strain ATCC 15356 / DSM 50701 / NCIMB 9529 / HD100).